Reading from the N-terminus, the 232-residue chain is Platelet-activating factor acetylhydrolase IB subunit alpha1 (232 aa).

Ser2 bears the N-acetylserine mark. Ser2 is subject to Phosphoserine. Active-site residues include Ser47, Asp192, and His195.

It belongs to the 'GDSL' lipolytic enzyme family. Platelet-activating factor acetylhydrolase IB beta/gamma subunits subfamily. In terms of assembly, forms a catalytic dimer which is either homodimer (alpha1/alpha1 homodimer) or heterodimer with PAFAH1B2 (alpha1/alpha2 heterodimer). Component of the cytosolic (PAF-AH (I)) heterotetrameric enzyme, which is composed of PAFAH1B1 (beta), PAFAH1B2 (alpha2) and PAFAH1B3 (alpha1) subunits. The catalytic activity of the enzyme resides in the alpha1 (PAFAH1B3) and alpha2 (PAFAH1B2) subunits, whereas the beta subunit (PAFAH1B1) has regulatory activity. Trimer formation is not essential for the catalytic activity. Interacts with VLDLR; this interaction may modulate the Reelin pathway.

Its subcellular location is the cytoplasm. It carries out the reaction a 1-O-alkyl-2-acetyl-sn-glycero-3-phosphocholine + H2O = a 1-O-alkyl-sn-glycero-3-phosphocholine + acetate + H(+). The enzyme catalyses 1-O-hexadecyl-2-acetyl-sn-glycero-3-phosphocholine + H2O = 1-O-hexadecyl-sn-glycero-3-phosphocholine + acetate + H(+). It catalyses the reaction 1-O-hexadecyl-2-acetyl-sn-glycero-3-phosphate + H2O = 1-O-hexadecyl-sn-glycero-3-phosphate + acetate + H(+). Its activity is regulated as follows. Beta subunit (PAFAH1B1) inhibits the acetylhydrolase activity of the alpha1/alpha1 catalytic homodimer. Its function is as follows. Alpha1 catalytic subunit of the cytosolic type I platelet-activating factor (PAF) acetylhydrolase (PAF-AH (I)) heterotetrameric enzyme that catalyzes the hydrolyze of the acetyl group at the sn-2 position of PAF and its analogs and modulates the action of PAF. The activity and substrate specificity of PAF-AH (I) are affected by its subunit composition. Both alpha1/alpha1 homodimer (PAFAH1B3/PAFAH1B3 homodimer) and alpha1/alpha2 heterodimer(PAFAH1B3/PAFAH1B2 heterodimer) hydrolyze 1-O-alkyl-2-acetyl-sn-glycero-3-phosphoric acid (AAGPA) more efficiently than PAF, but they have little hydrolytic activity towards 1-O-alkyl-2-acetyl-sn-glycero-3-phosphorylethanolamine (AAGPE). Plays an important role during the development of brain. This chain is Platelet-activating factor acetylhydrolase IB subunit alpha1, found in Bos taurus (Bovine).